Here is a 352-residue protein sequence, read N- to C-terminus: S-adenosylmethionine:tRNA ribosyltransferase-isomerase (352 aa).

It belongs to the QueA family. Monomer.

The protein resides in the cytoplasm. The enzyme catalyses 7-aminomethyl-7-carbaguanosine(34) in tRNA + S-adenosyl-L-methionine = epoxyqueuosine(34) in tRNA + adenine + L-methionine + 2 H(+). The protein operates within tRNA modification; tRNA-queuosine biosynthesis. Functionally, transfers and isomerizes the ribose moiety from AdoMet to the 7-aminomethyl group of 7-deazaguanine (preQ1-tRNA) to give epoxyqueuosine (oQ-tRNA). This is S-adenosylmethionine:tRNA ribosyltransferase-isomerase from Bacteroides fragilis (strain ATCC 25285 / DSM 2151 / CCUG 4856 / JCM 11019 / LMG 10263 / NCTC 9343 / Onslow / VPI 2553 / EN-2).